The sequence spans 420 residues: Zinc finger protein Pegasus (420 aa).

Lysine 5 participates in a covalent cross-link: Glycyl lysine isopeptide (Lys-Gly) (interchain with G-Cter in SUMO2). 3 consecutive C2H2-type zinc fingers follow at residues leucine 82 to histidine 104, histidine 110 to histidine 132, and tyrosine 138 to histidine 161. Residue lysine 185 forms a Glycyl lysine isopeptide (Lys-Gly) (interchain with G-Cter in SUMO2) linkage. Composition is skewed to polar residues over residues glutamine 223–threonine 236 and leucine 262–alanine 273. Disordered stretches follow at residues glutamine 223–methionine 247 and leucine 262–proline 356. Residues glutamine 290–threonine 311 show a composition bias toward low complexity. Residues serine 332 to serine 349 are compositionally biased toward polar residues. The segment at histidine 364–histidine 387 adopts a C2H2-type 4; degenerate zinc-finger fold. Residues phenylalanine 393 to histidine 417 form a C2H2-type 5 zinc finger.

The protein belongs to the Ikaros C2H2-type zinc-finger protein family. Self-associates. Interacts with other family members; IKZF1, IKZF2, IKZF3 and IKZF4.

It localises to the nucleus. Functionally, transcriptional repressor that binds the core 5'GNNTGTNG-3' DNA consensus sequence. Involved in megakaryocyte differentiation. This Pongo abelii (Sumatran orangutan) protein is Zinc finger protein Pegasus (IKZF5).